Consider the following 332-residue polypeptide: L-lactate dehydrogenase A chain (332 aa).

An N-acetylalanine modification is found at Ala2. Residue Lys5 is modified to N6-acetyllysine; alternate. N6-succinyllysine; alternate is present on Lys5. N6-acetyllysine is present on Lys14. An NAD(+)-binding site is contributed by 29 to 57; that stretch reads GAVGMACAISILMKDLADELALVDVIEDK. At Lys57 the chain carries N6-acetyllysine; alternate. Lys57 is covalently cross-linked (Glycyl lysine isopeptide (Lys-Gly) (interchain with G-Cter in SUMO2); alternate). Lys81 is subject to N6-acetyllysine. Residue Arg99 participates in NAD(+) binding. Residue Arg106 coordinates substrate. An N6-acetyllysine; alternate modification is found at Lys118. Lys118 carries the post-translational modification N6-succinyllysine; alternate. At Lys126 the chain carries N6-acetyllysine. Asn138 contributes to the NAD(+) binding site. Residues Asn138 and Arg169 each contribute to the substrate site. His193 serves as the catalytic Proton acceptor. Ser213 is modified (phosphoserine). 2 positions are modified to N6-acetyllysine: Lys224 and Lys232. Residue Tyr239 is modified to Phosphotyrosine. Lys243 carries the post-translational modification N6-acetyllysine. Residue Thr248 coordinates substrate. Position 309 is a phosphothreonine (Thr309). Lys318 carries the N6-acetyllysine; alternate modification. At Lys318 the chain carries N6-succinyllysine; alternate. Position 322 is a phosphothreonine (Thr322).

This sequence belongs to the LDH/MDH superfamily. LDH family. In terms of assembly, homotetramer. Interacts with PTEN upstream reading frame protein MP31. ISGylated.

Its subcellular location is the cytoplasm. The catalysed reaction is (S)-lactate + NAD(+) = pyruvate + NADH + H(+). It functions in the pathway fermentation; pyruvate fermentation to lactate; (S)-lactate from pyruvate: step 1/1. Functionally, interconverts simultaneously and stereospecifically pyruvate and lactate with concomitant interconversion of NADH and NAD(+). This chain is L-lactate dehydrogenase A chain (Ldha), found in Rattus norvegicus (Rat).